The chain runs to 284 residues: MPRYAQLVMGPAGSGKSTYCATMVQHCEALNRSVQVVNLDPAAEHFNYSVMADIRELIEVDDVMEDDSLRFGPNGGLVFCMEYFANNFDWLENCLGHVEDDYILFDCPGQIELYTHLPVMKQLVQQLEQWEFRVCGVFLVDSQFMVESFKFISGILAALSAMISLEIPQVNIMTKMDLLSKKAKKEIEKFLDPDMYSLLEDSTSDLRSKKFKKLTKAICGLIDDYSMVRFLPYDQSDEESMNIVLQHIDFAIQYGEDLEFKEPKEREDESSSMFDEYFQECQDE.

Position 13 to 18 (13 to 18) interacts with GTP; the sequence is GSGKST. The Gly-Pro-Asn (GPN)-loop; involved in dimer interface signature appears at 72–74; sequence GPN. 174-177 provides a ligand contact to GTP; the sequence is TKMD.

It belongs to the GPN-loop GTPase family. As to quaternary structure, heterodimer with GPN1. Binds to RNA polymerase II (RNAPII). Interacts directly with subunits RPB4 and RPB7 and the CTD of RPB1.

In terms of biological role, small GTPase required for proper localization of RNA polymerase II (RNAPII). May act at an RNAP assembly step prior to nuclear import. This is GPN-loop GTPase 3 from Homo sapiens (Human).